The sequence spans 201 residues: Glutathione peroxidase 1 (201 aa).

Ser7 and Ser32 each carry phosphoserine. Sec47 is a catalytic residue. A non-standard amino acid (selenocysteine) is located at residue Sec47. Residues Lys62, Lys86, and Lys112 each carry the N6-acetyllysine; alternate modification. N6-succinyllysine; alternate is present on residues Lys62, Lys86, and Lys112. Lys119 is modified (N6-acetyllysine). Lys146 carries the N6-acetyllysine; alternate modification. Lys146 carries the N6-succinyllysine; alternate modification. Ser195 is subject to Phosphoserine.

The protein belongs to the glutathione peroxidase family. Homotetramer. Interacts with MIEN1. In terms of processing, during periods of oxidative stress, Sec-47 may react with a superoxide radical, irreversibly lose hydroselenide and be converted to dehydroalanine. In terms of tissue distribution, expressed in liver, kidney, lung, brain and heart.

It is found in the cytoplasm. The protein resides in the mitochondrion. It carries out the reaction 2 glutathione + H2O2 = glutathione disulfide + 2 H2O. The enzyme catalyses a hydroperoxy polyunsaturated fatty acid + 2 glutathione = a hydroxy polyunsaturated fatty acid + glutathione disulfide + H2O. It catalyses the reaction tert-butyl hydroperoxide + 2 glutathione = tert-butanol + glutathione disulfide + H2O. The catalysed reaction is cumene hydroperoxide + 2 glutathione = 2-phenylpropan-2-ol + glutathione disulfide + H2O. It carries out the reaction (13S)-hydroperoxy-(9Z,11E)-octadecadienoate + 2 glutathione = (13S)-hydroxy-(9Z,11E)-octadecadienoate + glutathione disulfide + H2O. The enzyme catalyses (9S)-hydroperoxy-(10E,12Z)-octadecadienoate + 2 glutathione = (9S)-hydroxy-(10E,12Z)-octadecadienoate + glutathione disulfide + H2O. It catalyses the reaction (5S)-hydroperoxy-(6E,8Z,11Z,14Z)-eicosatetraenoate + 2 glutathione = (5S)-hydroxy-(6E,8Z,11Z,14Z)-eicosatetraenoate + glutathione disulfide + H2O. The catalysed reaction is (12S)-hydroperoxy-(5Z,8Z,10E,14Z)-eicosatetraenoate + 2 glutathione = (12S)-hydroxy-(5Z,8Z,10E,14Z)-eicosatetraenoate + glutathione disulfide + H2O. It carries out the reaction (12R)-hydroperoxy-(5Z,8Z,10E,14Z)-eicosatetraenoate + 2 glutathione = (12R)-hydroxy-(5Z,8Z,10E,14Z)-eicosatetraenoate + glutathione disulfide + H2O. The enzyme catalyses (15S)-hydroperoxy-(5Z,8Z,11Z,13E)-eicosatetraenoate + 2 glutathione = (15S)-hydroxy-(5Z,8Z,11Z,13E)-eicosatetraenoate + glutathione disulfide + H2O. It catalyses the reaction (5S)-hydroperoxy-(6E,8Z,11Z,14Z,17Z)-eicosapentaenoate + 2 glutathione = (5S)-hydroxy-(6E,8Z,11Z,14Z,17Z)-eicosapentaenoate + glutathione disulfide + H2O. The catalysed reaction is (12S)-hydroperoxy-(5Z,8Z,10E,14Z,17Z)-eicosapentaenoate + 2 glutathione = (12S)-hydroxy-(5Z,8Z,10E,14Z,17Z)-eicosapentaenoate + glutathione disulfide + H2O. It carries out the reaction (15S)-hydroperoxy-(5Z,8Z,11Z,13E,17Z)-eicosapentaenoate + 2 glutathione = (15S)-hydroxy-(5Z,8Z,11Z,13E,17Z)-eicosapentaenoate + glutathione disulfide + H2O. The enzyme catalyses (15S)-hydroperoxy-(11Z,13E)-eicosadienoate + 2 glutathione = (15S)-hydroxy-(11Z,13E)-eicosadienoate + glutathione disulfide + H2O. It catalyses the reaction (17S)-hydroperoxy-(4Z,7Z,10Z,13Z,15E,19Z)-docosahexaenoate + 2 glutathione = (17S)-hydroxy-(4Z,7Z,10Z,13Z,15E,19Z)-docosahexaenoate + glutathione disulfide + H2O. In terms of biological role, catalyzes the reduction of hydroperoxides in a glutathione-dependent manner thus regulating cellular redox homeostasis. Can reduce small soluble hydroperoxides such as H2O2, cumene hydroperoxide and tert-butyl hydroperoxide, as well as several fatty acid-derived hydroperoxides. In platelets catalyzes the reduction of 12-hydroperoxyeicosatetraenoic acid, the primary product of the arachidonate 12-lipoxygenase pathway. This is Glutathione peroxidase 1 from Mus musculus (Mouse).